The following is an 88-amino-acid chain: Protein LE25 (88 aa).

Positions 1 to 88 are disordered; it reads MQTGKDAASA…YGATGNHTTF (88 aa). The segment covering 14-65 has biased composition (basic and acidic residues); that stretch reads GMEKTKANVQEKAERMTTRDPLKKEMATEKKEDRVAAAEMGKRDAKAQHAAE.

It belongs to the LEA type 1 family. Accumulates in developing seeds and drought-stressed leaves.

The chain is Protein LE25 (LE25) from Solanum lycopersicum (Tomato).